We begin with the raw amino-acid sequence, 184 residues long: Photosystem I assembly protein Ycf4 (184 aa).

Helical transmembrane passes span 22–42 (FCWA…GTSS) and 57–77 (IVFF…LFIS).

Belongs to the Ycf4 family.

The protein resides in the plastid. The protein localises to the chloroplast thylakoid membrane. Its function is as follows. Seems to be required for the assembly of the photosystem I complex. The protein is Photosystem I assembly protein Ycf4 of Helianthus annuus (Common sunflower).